Consider the following 440-residue polypeptide: Xylose isomerase (440 aa).

Catalysis depends on residues histidine 101 and aspartate 104. 7 residues coordinate Mg(2+): glutamate 232, glutamate 268, histidine 271, aspartate 296, aspartate 307, aspartate 309, and aspartate 339.

It belongs to the xylose isomerase family. As to quaternary structure, homotetramer. It depends on Mg(2+) as a cofactor.

Its subcellular location is the cytoplasm. It catalyses the reaction alpha-D-xylose = alpha-D-xylulofuranose. The sequence is that of Xylose isomerase from Escherichia coli O157:H7.